Here is a 473-residue protein sequence, read N- to C-terminus: Nuclear distribution protein PAC1 (473 aa).

In terms of domain architecture, LisH spans 9–41 (QAEELHKSIIAYFLSAKLPKSAAALREEIADSV). Residues 60–87 (TSVVRLQKKIMDLEARNSALQSELDSAT) adopt a coiled-coil conformation. A compositionally biased stretch (polar residues) spans 80-93 (QSELDSATPTSLSR). The interval 80-99 (QSELDSATPTSLSRRNQDPV) is disordered. 8 WD repeats span residues 113–154 (SHRN…RTIK), 156–196 (HTRA…KNIR), 200–247 (GHDH…CVRT), 250–289 (GHVE…TKST), 292–352 (GHEH…IKTL), 354–393 (GHDN…KCVR), 397–434 (DAHA…ALSG), and 435–472 (VNGI…RVFA).

Belongs to the WD repeat LIS1/nudF family. As to quaternary structure, self-associates. Interacts with NDL1 and dynein.

It is found in the cytoplasm. The protein localises to the cytoskeleton. Its subcellular location is the spindle pole. Positively regulates the activity of the minus-end directed microtubule motor protein dynein. May enhance dynein-mediated microtubule sliding by targeting dynein to the microtubule plus end. Required for nuclear migration during vegetative growth as well as development. Required for retrograde early endosome (EE) transport from the hyphal tip. Required for localization of dynein to the mitotic spindle poles. Recruits additional proteins to the dynein complex at SPBs. This chain is Nuclear distribution protein PAC1, found in Ajellomyces dermatitidis (strain ER-3 / ATCC MYA-2586) (Blastomyces dermatitidis).